The sequence spans 33 residues: Dermonecrotic toxin LiSicTox-alphaI-1 (33 aa).

Mg(2+) is bound at residue E32.

It belongs to the arthropod phospholipase D family. Class II subfamily. Mg(2+) serves as cofactor. Contains 2 disulfide bonds. As to expression, expressed by the venom gland.

It localises to the secreted. It catalyses the reaction an N-(acyl)-sphingosylphosphocholine = an N-(acyl)-sphingosyl-1,3-cyclic phosphate + choline. The catalysed reaction is an N-(acyl)-sphingosylphosphoethanolamine = an N-(acyl)-sphingosyl-1,3-cyclic phosphate + ethanolamine. It carries out the reaction a 1-acyl-sn-glycero-3-phosphocholine = a 1-acyl-sn-glycero-2,3-cyclic phosphate + choline. The enzyme catalyses a 1-acyl-sn-glycero-3-phosphoethanolamine = a 1-acyl-sn-glycero-2,3-cyclic phosphate + ethanolamine. Dermonecrotic toxins cleave the phosphodiester linkage between the phosphate and headgroup of certain phospholipids (sphingolipid and lysolipid substrates), forming an alcohol (often choline) and a cyclic phosphate. This toxin acts on sphingomyelin (SM). It may also act on ceramide phosphoethanolamine (CPE), lysophosphatidylcholine (LPC) and lysophosphatidylethanolamine (LPE), but not on lysophosphatidylserine (LPS), and lysophosphatidylglycerol (LPG). It acts by transphosphatidylation, releasing exclusively cyclic phosphate products as second products. In vivo, intradermal injection induces dermonecrosis. Induces hemolysis, increased vascular permeability, edema, inflammatory response, and platelet aggregation. The polypeptide is Dermonecrotic toxin LiSicTox-alphaI-1 (Loxosceles intermedia (Brown spider)).